We begin with the raw amino-acid sequence, 502 residues long: T-complex protein 11-like X-linked protein 1 (502 aa).

The tract at residues 1 to 36 (MPKTEETVLQNDPSVAENGAPEPKTPGQSQKSKSFC) is disordered.

Belongs to the TCP11 family.

In Homo sapiens (Human), this protein is T-complex protein 11-like X-linked protein 1.